The primary structure comprises 1407 residues: DNA-directed RNA polymerase subunit beta' (1407 aa).

Zn(2+)-binding residues include C70, C72, C85, and C88. Residues D460, D462, and D464 each contribute to the Mg(2+) site. Zn(2+) is bound by residues C814, C888, C895, and C898.

The protein belongs to the RNA polymerase beta' chain family. In terms of assembly, the RNAP catalytic core consists of 2 alpha, 1 beta, 1 beta' and 1 omega subunit. When a sigma factor is associated with the core the holoenzyme is formed, which can initiate transcription. Requires Mg(2+) as cofactor. It depends on Zn(2+) as a cofactor.

It carries out the reaction RNA(n) + a ribonucleoside 5'-triphosphate = RNA(n+1) + diphosphate. Functionally, DNA-dependent RNA polymerase catalyzes the transcription of DNA into RNA using the four ribonucleoside triphosphates as substrates. This Cronobacter sakazakii (strain ATCC BAA-894) (Enterobacter sakazakii) protein is DNA-directed RNA polymerase subunit beta'.